A 314-amino-acid polypeptide reads, in one-letter code: D-alanine--D-alanine ligase (314 aa).

Positions 112-307 (KQVWQSLGLP…FQQLVLSILD (196 aa)) constitute an ATP-grasp domain. 138-193 (AQMLGFPLIVKPAHEGSSIGMAKVGDVAELIAAWRAASAYDAQVLVEQWIQGPEFT) contributes to the ATP binding site. The Mg(2+) site is built by Asp-261, Glu-274, and Asn-276.

The protein belongs to the D-alanine--D-alanine ligase family. It depends on Mg(2+) as a cofactor. Requires Mn(2+) as cofactor.

Its subcellular location is the cytoplasm. It catalyses the reaction 2 D-alanine + ATP = D-alanyl-D-alanine + ADP + phosphate + H(+). It participates in cell wall biogenesis; peptidoglycan biosynthesis. Functionally, cell wall formation. This Stutzerimonas stutzeri (strain A1501) (Pseudomonas stutzeri) protein is D-alanine--D-alanine ligase.